A 139-amino-acid chain; its full sequence is Small ribosomal subunit protein uS12 (139 aa).

Belongs to the universal ribosomal protein uS12 family. Part of the 30S ribosomal subunit. Contacts proteins S8 and S17. May interact with IF1 in the 30S initiation complex.

With S4 and S5 plays an important role in translational accuracy. In terms of biological role, interacts with and stabilizes bases of the 16S rRNA that are involved in tRNA selection in the A site and with the mRNA backbone. Located at the interface of the 30S and 50S subunits, it traverses the body of the 30S subunit contacting proteins on the other side and probably holding the rRNA structure together. The combined cluster of proteins S8, S12 and S17 appears to hold together the shoulder and platform of the 30S subunit. This is Small ribosomal subunit protein uS12 from Mycoplasma pneumoniae (strain ATCC 29342 / M129 / Subtype 1) (Mycoplasmoides pneumoniae).